Reading from the N-terminus, the 302-residue chain is MLDRDNALQVAAVLSKALPYIQRFAGKTIVIKYGGNAMTDEELKNSFARDVVMMKLVGINPIVVHGGGPQIGDLLQRLNIKSSFINGLRVTDSETMDVVEMVLGGSVNKDIVALINRNGGKAIGLTGKDANFITARKLEVTRATPDMQKPEIIDIGHVGEVTGVRKDIITMLTDSDCIPVIAPIGVGQDGASYNINADLVAGKVAEVLQAEKLMLLTNIAGLMNKEGKVLTGLSTKQVDELIADGTIHGGMLPKIECALSAVKNGVHSAHIIDGRVPHATLLEIFTDEGVGTLITRKGCDDA.

Substrate contacts are provided by residues 67–68 (GG), Arg-89, and Asn-194.

It belongs to the acetylglutamate kinase family. ArgB subfamily.

The protein resides in the cytoplasm. It catalyses the reaction N-acetyl-L-glutamate + ATP = N-acetyl-L-glutamyl 5-phosphate + ADP. It functions in the pathway amino-acid biosynthesis; L-arginine biosynthesis; N(2)-acetyl-L-ornithine from L-glutamate: step 2/4. In terms of biological role, catalyzes the ATP-dependent phosphorylation of N-acetyl-L-glutamate. In Hahella chejuensis (strain KCTC 2396), this protein is Acetylglutamate kinase.